The sequence spans 190 residues: Potassium-transporting ATPase KdpC subunit (190 aa).

The chain crosses the membrane as a helical span at residues 10–30 (TFLFLLLITGGVYPLLTTALG).

Belongs to the KdpC family. In terms of assembly, the system is composed of three essential subunits: KdpA, KdpB and KdpC.

The protein resides in the cell inner membrane. Its function is as follows. Part of the high-affinity ATP-driven potassium transport (or Kdp) system, which catalyzes the hydrolysis of ATP coupled with the electrogenic transport of potassium into the cytoplasm. This subunit acts as a catalytic chaperone that increases the ATP-binding affinity of the ATP-hydrolyzing subunit KdpB by the formation of a transient KdpB/KdpC/ATP ternary complex. The protein is Potassium-transporting ATPase KdpC subunit of Escherichia coli O45:K1 (strain S88 / ExPEC).